Consider the following 336-residue polypeptide: Urokinase plasminogen activator surface receptor (336 aa).

The signal sequence occupies residues 1–23 (MGHPLLLPLLLLLLHTGVPASWG). UPAR/Ly6 domains lie at 24–111 (LRCM…VTFP), 116–208 (LECI…LSLA), and 215–302 (HRCY…EDIQ). 3 cysteine pairs are disulfide-bonded: Cys-26-Cys-47, Cys-29-Cys-35, and Cys-40-Cys-68. N-linked (GlcNAc...) asparagine glycosylation occurs at Asn-75. Disulfide bonds link Cys-94–Cys-99, Cys-118–Cys-145, Cys-121–Cys-128, Cys-138–Cys-170, Cys-176–Cys-193, Cys-194–Cys-199, Cys-217–Cys-245, Cys-220–Cys-228, Cys-238–Cys-264, Cys-270–Cys-288, and Cys-289–Cys-294. N-linked (GlcNAc...) asparagine glycans are attached at residues Asn-195 and Asn-223.

As to quaternary structure, monomer. Interacts (via the UPAR/Ly6 domains) with SRPX2. Interacts with MRC2. Interacts with FAP (seprase); the interaction occurs at the cell surface of invadopodia membrane. Interacts with SORL1 (via N-terminal ectodomain); this interaction decreases PLAUR internalization. The ternary complex composed of PLAUR-PLAU-SERPINE1 also interacts with SORL1.

The protein localises to the cell membrane. It localises to the cell projection. The protein resides in the invadopodium membrane. Acts as a receptor for urokinase plasminogen activator. Plays a role in localizing and promoting plasmin formation. Mediates the proteolysis-independent signal transduction activation effects of U-PA. It is subject to negative-feedback regulation by U-PA which cleaves it into an inactive form. This chain is Urokinase plasminogen activator surface receptor (PLAUR), found in Aotus trivirgatus (Three-striped night monkey).